The sequence spans 158 residues: Putative metalloproteinase inhibitor tag-225 (158 aa).

The signal sequence occupies residues 1-20 (MQNLSLSLVILSVLIAVTLA). Residue C21 coordinates Zn(2+). An involved in metalloproteinase-binding region spans residues 21–25 (CKCRE). 3 disulfides stabilise this stretch: C21/C96, C23/C123, and C33/C158. An NTR domain is found at 21–158 (CKCREQSTKE…LQSQVKSIKC (138 aa)). N79 carries N-linked (GlcNAc...) asparagine glycosylation. The tract at residues 93-94 (AP) is involved in metalloproteinase-binding.

This sequence belongs to the protease inhibitor I35 (TIMP) family.

It localises to the secreted. Its function is as follows. Complexes with metalloproteinases and irreversibly inactivates them by binding to their catalytic zinc cofactor. This Caenorhabditis elegans protein is Putative metalloproteinase inhibitor tag-225 (tag-225).